The chain runs to 308 residues: Probable 5-dehydro-4-deoxyglucarate dehydratase (308 aa).

It belongs to the DapA family.

It catalyses the reaction 5-dehydro-4-deoxy-D-glucarate + H(+) = 2,5-dioxopentanoate + CO2 + H2O. It participates in carbohydrate acid metabolism; D-glucarate degradation; 2,5-dioxopentanoate from D-glucarate: step 2/2. This chain is Probable 5-dehydro-4-deoxyglucarate dehydratase, found in Oceanobacillus iheyensis (strain DSM 14371 / CIP 107618 / JCM 11309 / KCTC 3954 / HTE831).